Consider the following 470-residue polypeptide: TNF receptor-associated factor 4 (470 aa).

The segment at 18–58 (CPLCGKPMREPVQVSTCGHRFCDTCLQEFLSEGVFKCPEDQ) adopts an RING-type zinc-finger fold. 3 TRAF-type zinc fingers span residues 102–154 (HLNT…EAYE), 155–208 (SHEG…DTIQ), and 209–266 (SHQY…KLAM). Residue lysine 263 forms a Glycyl lysine isopeptide (Lys-Gly) (interchain with G-Cter in ubiquitin) linkage. Positions 277–309 (HLAMMCALVSRQRQELQELRRELEELSVGSDGV) form a coiled coil. The 156-residue stretch at 307–462 (DGVLIWKIGS…DDAVFIRAAV (156 aa)) folds into the MATH domain. At serine 426 the chain carries Phosphoserine.

This sequence belongs to the TNF receptor-associated factor family. B subfamily. In terms of assembly, homotrimer. Interacts with LTBR/TNFRSF3, NGFR/TNFRSF16, RPS6KB1 and TGFB1I1. Interacts with SMURF1. Interacts (via TRAF domain) with MAP3K4 (via kinase domain). Interacts with NCF1, TICAM1, IRAK1 and TRAF6, and is probably part of a complex containing TRAF4, NCF1, TICAM1, IRAK1 and TRAF6. Interacts (via MATH domain) with GP6 and GP1BB. Interacts with EGFR (via C-terminal region); this interaction promotes the formation of EGFR asymmetric dimers. Interacts with PKM; this interaction promotes PKM kinase activity. Polyubiquitinated, leading to its proteasomal degradation. Ubiquitinated at Lys-263 by the SCF(FBXL2) complex, leading to its degradation by the proteasome. In terms of tissue distribution, expressed in epithelial cells of thymus, dendritic cells of lymph node, and in the basal cell layer of epithelia such as epidermis, nasopharynx, respiratory tract, salivary gland, and esophagus.

Its subcellular location is the cytoplasm. It localises to the nucleus. The protein resides in the perinuclear region. It is found in the cell junction. The protein localises to the tight junction. Its subcellular location is the cell membrane. It localises to the cytoskeleton. It carries out the reaction S-ubiquitinyl-[E2 ubiquitin-conjugating enzyme]-L-cysteine + [acceptor protein]-L-lysine = [E2 ubiquitin-conjugating enzyme]-L-cysteine + N(6)-ubiquitinyl-[acceptor protein]-L-lysine.. It functions in the pathway protein degradation; proteasomal ubiquitin-dependent pathway. Adapter protein with E3 ligase activity that is involved in many diverse biological processes including cell proliferation, migration, differentiation, DNA repair, platelet activation or apoptosis. Promotes EGFR-mediated signaling by facilitating the dimerization of EGFR and downstream AKT activation thereby promoting cell proliferation. Ubiquitinates SMURF2 through 'Lys-48'-linked ubiquitin chain leading to SMURF2 degradation through the proteasome and subsequently osteogenic differentiation. Promotes 'Lys-63'-mediated ubiquitination of CHK1 which in turn activates cell cycle arrest and activation of DNA repair. In addition, promotes an atypical 'Lys-29'-linked ubiquitination at the C-terminal end of IRS1 which is crucial for insulin-like growth factor (IGF) signal transduction. Regulates activation of NF-kappa-B in response to signaling through Toll-like receptors. Required for normal skeleton development, and for normal development of the respiratory tract. Required for activation of RPS6KB1 in response to TNF signaling. Modulates TRAF6 functions. Inhibits adipogenic differentiation by activating pyruvate kinase PKM activity and subsequently the beta-catenin signaling pathway. In Homo sapiens (Human), this protein is TNF receptor-associated factor 4 (TRAF4).